The following is a 527-amino-acid chain: uncharacterized protein (527 aa).

Disordered regions lie at residues 1-49 (MSSF…IKDE), 99-307 (DFNF…ATTT), 319-353 (TEIN…EDEN), and 382-419 (YINN…QQQE). A compositionally biased stretch (acidic residues) spans 8–17 (YDDESEEEDN). 2 stretches are compositionally biased toward low complexity: residues 18 to 44 (NNNN…NSNN) and 99 to 115 (DFNF…NSNN). Positions 141–150 (NEFRNPDLKN) are enriched in basic and acidic residues. 2 stretches are compositionally biased toward low complexity: residues 167–178 (SSQNTTTTQQSS) and 186–222 (NNNN…NSNN). Residues 229-248 (DDKSKKINENENTVNKKDNI) show a composition bias toward basic and acidic residues. Over residues 283-296 (LRKKLLKNQPKTKK) the composition is skewed to basic residues. Low complexity-rich tracts occupy residues 297–307 (STTTTTTATTT) and 319–330 (TEINNNNSNSNN). Positions 386–410 (DDGDDDDDDDENENENDSQPEEEYE) are enriched in acidic residues.

This is an uncharacterized protein from Dictyostelium discoideum (Social amoeba).